We begin with the raw amino-acid sequence, 430 residues long: Glutamate-1-semialdehyde 2,1-aminomutase (430 aa).

An N6-(pyridoxal phosphate)lysine modification is found at Lys265.

This sequence belongs to the class-III pyridoxal-phosphate-dependent aminotransferase family. HemL subfamily. Homodimer. It depends on pyridoxal 5'-phosphate as a cofactor.

The protein resides in the cytoplasm. It carries out the reaction (S)-4-amino-5-oxopentanoate = 5-aminolevulinate. It participates in porphyrin-containing compound metabolism; protoporphyrin-IX biosynthesis; 5-aminolevulinate from L-glutamyl-tRNA(Glu): step 2/2. The protein is Glutamate-1-semialdehyde 2,1-aminomutase of Shewanella sp. (strain MR-4).